Consider the following 2148-residue polypeptide: Polyketide synthase 1 (2148 aa).

Residues 19–261 form an N-terminal acylcarrier protein transacylase domain (SAT) region; the sequence is FIFGDQSSCN…TPLAVHAPYH (243 aa). Residues 394 to 829 form the Ketosynthase family 3 (KS3) domain; the sequence is ESKIAIIGMS…GGNTALLVED (436 aa). Active-site for beta-ketoacyl synthase activity residues include C566, H701, and H745. Positions 930-1236 are malonyl-CoA:ACP transacylase (MAT) domain; the sequence is FVFSGQGSQY…MRNKDGWQVL (307 aa). The active-site For acyl/malonyl transferase activity is S1018. Residues 1310–1624 form a product template (PT) domain region; that stretch reads TASVHRMVHE…RKVLNTAMPP (315 aa). The tract at residues 1314–1447 is N-terminal hotdog fold; sequence HRMVHESVEK…SSLHFEQPKV (134 aa). In terms of domain architecture, PKS/mFAS DH spans 1314–1619; sequence HRMVHESVEK…FQGIPRKVLN (306 aa). H1346 (proton acceptor; for dehydratase activity) is an active-site residue. Positions 1474–1619 are C-terminal hotdog fold; that stretch reads LNSRMSSGVI…FQGIPRKVLN (146 aa). D1533 functions as the Proton donor; for dehydratase activity in the catalytic mechanism. The tract at residues 1619-1655 is disordered; that stretch reads NTAMPPPKSQNEAPVRSGPAKPAAKPPRSASSEHSGH. Over residues 1634–1650 the composition is skewed to low complexity; it reads RSGPAKPAAKPPRSASS. The Carrier 1 domain maps to 1678 to 1752; it reads RNPMLPVFKI…DLAAQLGLDT (75 aa). S1712 is subject to O-(pantetheine 4'-phosphoryl)serine. The span at 1755 to 1790 shows a compositional bias: low complexity; sequence SDQSSGQSSSSGGLSPRSDSIGEITSSVTTPPSLSP. The segment at 1755 to 1796 is disordered; it reads SDQSSGQSSSSGGLSPRSDSIGEITSSVTTPPSLSPRGSVSG. Positions 1793 to 1870 constitute a Carrier 2 domain; it reads SVSGSQCKDV…SFKHMFQQGH (78 aa). O-(pantetheine 4'-phosphoryl)serine is present on S1830. The tract at residues 1882 to 2146 is thioesterase (TE) domain; sequence LKQYRATSTL…ERVAAFIRST (265 aa). The For thioesterase activity role is filled by S1973.

The protein operates within pigment biosynthesis. In terms of biological role, polyketide synthase; part of the Pks1 gene cluster that mediates the biosynthesis of an anthraquinone derivative pigment that contributes to conidial pigmentation that provides protection from UV radiation, heat and cold stress. The polyketide synthase Pks1 produces 1-acetyl-2,4,6,8-tetrahydroxy-9,10-anthraquinone though condensation of acetyl-CoA with malonyl-CoA. The dehydratase EthD and the laccase Mlac1 further convert the anthraquinone derivative into the final conidial pigment. The protein is Polyketide synthase 1 of Metarhizium robertsii (strain ARSEF 23 / ATCC MYA-3075) (Metarhizium anisopliae (strain ARSEF 23)).